The following is an 87-amino-acid chain: Phosphocarrier protein HPr (87 aa).

The region spanning 1-87 is the HPr domain; that stretch reads MEKIFKVTSD…ETMKNEGLGE (87 aa). Residue H14 is the Pros-phosphohistidine intermediate; alternate of the active site. H14 bears the Tele-phosphohistidine; alternate mark. Position 45 is a phosphoserine; by HPrK/P (S45).

The protein belongs to the HPr family. Post-translationally, the form phosphorylated at the tele nitrogen (N(epsilon)2), instead of the expected pros nitrogen (N(delta)1), of His-14 is not able to transfer its phosphoryl group to the B.subtilis EIIA-Glc domain. This form may be inactive in PTS-catalyzed sugar transport or target an as yet unknown acceptor molecule in an alternative metabolic process.

The protein localises to the cytoplasm. Phosphorylation on Ser-45 inhibits the phosphoryl transfer from enzyme I to HPr. Functionally, general (non sugar-specific) component of the phosphoenolpyruvate-dependent sugar phosphotransferase system (sugar PTS). This major carbohydrate active-transport system catalyzes the phosphorylation of incoming sugar substrates concomitantly with their translocation across the cell membrane. The phosphoryl group from phosphoenolpyruvate (PEP) is transferred to the phosphoryl carrier protein HPr by enzyme I. Phospho-HPr then transfers it to the PTS EIIA domain. In terms of biological role, P-Ser-HPr interacts with the catabolite control protein A (CcpA), forming a complex that binds to DNA at the catabolite response elements cre, operator sites preceding a large number of catabolite-regulated genes. Thus, P-Ser-HPr is a corepressor in carbon catabolite repression (CCR), a mechanism that allows bacteria to coordinate and optimize the utilization of available carbon sources. P-Ser-HPr mediates glucose catabolite repression of cry4A toxin expression. In Bacillus thuringiensis subsp. israelensis, this protein is Phosphocarrier protein HPr (ptsH).